Reading from the N-terminus, the 428-residue chain is Adenylosuccinate synthetase (428 aa).

Residues 12 to 18 (GDEGKGK) and 40 to 42 (GHT) each bind GTP. Catalysis depends on aspartate 13, which acts as the Proton acceptor. The Mg(2+) site is built by aspartate 13 and glycine 40. IMP is bound by residues 13 to 16 (DEGK), 38 to 41 (NAGH), threonine 127, arginine 141, glutamine 222, threonine 237, and arginine 301. Histidine 41 (proton donor) is an active-site residue. 297–303 (TVTKRPR) is a binding site for substrate. GTP is bound by residues arginine 303, 329–331 (CLD), and 411–413 (SVG).

The protein belongs to the adenylosuccinate synthetase family. In terms of assembly, homodimer. Requires Mg(2+) as cofactor.

It localises to the cytoplasm. It carries out the reaction IMP + L-aspartate + GTP = N(6)-(1,2-dicarboxyethyl)-AMP + GDP + phosphate + 2 H(+). The protein operates within purine metabolism; AMP biosynthesis via de novo pathway; AMP from IMP: step 1/2. Its function is as follows. Plays an important role in the de novo pathway of purine nucleotide biosynthesis. Catalyzes the first committed step in the biosynthesis of AMP from IMP. This is Adenylosuccinate synthetase from Levilactobacillus brevis (strain ATCC 367 / BCRC 12310 / CIP 105137 / JCM 1170 / LMG 11437 / NCIMB 947 / NCTC 947) (Lactobacillus brevis).